The following is a 269-amino-acid chain: Interleukin-1 beta (269 aa).

Positions 1–112 (MAMVPEITCD…EEPITFKNCD (112 aa)) are excised as a propeptide.

The protein belongs to the IL-1 family. As to quaternary structure, monomer. In its precursor form, weakly interacts with full-length MEFV; the mature cytokine does not interact at all. Interacts with integrins ITGAV:ITGBV and ITGA5:ITGB1; integrin-binding is required for IL1B signaling. Interacts with cargo receptor TMED10; the interaction is direct and is required for the secretion of IL1B mature form. Interacts with HSP90AB1; the interaction facilitates cargo translocation into the ERGIC. Interacts with HSP90B1; the interaction facilitates cargo translocation into the ERGIC.

The protein localises to the cytoplasm. The protein resides in the cytosol. It is found in the secreted. Its subcellular location is the lysosome. It localises to the extracellular exosome. Functionally, potent pro-inflammatory cytokine. Initially discovered as the major endogenous pyrogen, induces prostaglandin synthesis, neutrophil influx and activation, T-cell activation and cytokine production, B-cell activation and antibody production, and fibroblast proliferation and collagen production. Promotes Th17 differentiation of T-cells. Synergizes with IL12/interleukin-12 to induce IFNG synthesis from T-helper 1 (Th1) cells. Plays a role in angiogenesis by inducing VEGF production synergistically with TNF and IL6. Involved in transduction of inflammation downstream of pyroptosis: its mature form is specifically released in the extracellular milieu by passing through the gasdermin-D (GSDMD) pore. This is Interleukin-1 beta (IL1B) from Trichosurus vulpecula (Brush-tailed possum).